A 573-amino-acid polypeptide reads, in one-letter code: Delta 8-(E)-sphingolipid desaturase (573 aa).

Residues 2 to 77 (SRVLSRRDIA…FKIWKIGRID (76 aa)) enclose the Cytochrome b5 heme-binding domain. Heme is bound by residues His-37 and His-60. The chain crosses the membrane as a helical span at residues 228-248 (LFGISFYLLSLKWFAISAICL). Positions 260–264 (HDAGH) match the Histidine box-1 motif. The helical transmembrane segment at 273-293 (VDNIIGMTVASWIGGLSLGWW) threads the bilayer. The Histidine box-2 motif lies at 297–301 (HDVHH). The next 3 membrane-spanning stretches (helical) occupy residues 353-372 (YLYY…LSWM), 393-413 (LAEL…KQMP), and 422-442 (VMIS…SHFA). The Histidine box-3 signature appears at 481–485 (QVIHH).

The protein belongs to the fatty acid desaturase type 1 family.

It localises to the membrane. The catalysed reaction is an N-acylsphing-4-enine + 2 Fe(II)-[cytochrome b5] + O2 + 2 H(+) = a (4E,8E)-4-sphinga-4,8-dienine ceramide + 2 Fe(III)-[cytochrome b5] + 2 H2O. The protein operates within lipid metabolism; sphingolipid metabolism. Functionally, delta(8)-fatty-acid desaturase which introduces a double bond at the 8-position in the long-chain base (LCB) of ceramides. Required for the formation of the di-unsaturated sphingoid base (E,E)-sphinga-4,8-dienine during glucosylceramide (GluCer) biosynthesis. The protein is Delta 8-(E)-sphingolipid desaturase of Kluyveromyces lactis (Yeast).